The following is a 239-amino-acid chain: Ubiquinone biosynthesis O-methyltransferase (239 aa).

S-adenosyl-L-methionine-binding residues include Arg-44, Gly-63, Asp-84, and Met-128.

This sequence belongs to the methyltransferase superfamily. UbiG/COQ3 family.

The catalysed reaction is a 3-demethylubiquinol + S-adenosyl-L-methionine = a ubiquinol + S-adenosyl-L-homocysteine + H(+). The enzyme catalyses a 3-(all-trans-polyprenyl)benzene-1,2-diol + S-adenosyl-L-methionine = a 2-methoxy-6-(all-trans-polyprenyl)phenol + S-adenosyl-L-homocysteine + H(+). Its pathway is cofactor biosynthesis; ubiquinone biosynthesis. O-methyltransferase that catalyzes the 2 O-methylation steps in the ubiquinone biosynthetic pathway. The polypeptide is Ubiquinone biosynthesis O-methyltransferase (Xanthomonas euvesicatoria pv. vesicatoria (strain 85-10) (Xanthomonas campestris pv. vesicatoria)).